The sequence spans 518 residues: Protein nucleotidyltransferase YdiU (518 aa).

ATP contacts are provided by G99, G101, R102, K122, D134, G135, R192, and R199. Catalysis depends on D270, which acts as the Proton acceptor. 2 residues coordinate Mg(2+): N271 and D280. D280 contacts ATP.

It belongs to the SELO family. Mg(2+) serves as cofactor. Mn(2+) is required as a cofactor.

The enzyme catalyses L-seryl-[protein] + ATP = 3-O-(5'-adenylyl)-L-seryl-[protein] + diphosphate. It carries out the reaction L-threonyl-[protein] + ATP = 3-O-(5'-adenylyl)-L-threonyl-[protein] + diphosphate. The catalysed reaction is L-tyrosyl-[protein] + ATP = O-(5'-adenylyl)-L-tyrosyl-[protein] + diphosphate. It catalyses the reaction L-histidyl-[protein] + UTP = N(tele)-(5'-uridylyl)-L-histidyl-[protein] + diphosphate. The enzyme catalyses L-seryl-[protein] + UTP = O-(5'-uridylyl)-L-seryl-[protein] + diphosphate. It carries out the reaction L-tyrosyl-[protein] + UTP = O-(5'-uridylyl)-L-tyrosyl-[protein] + diphosphate. Nucleotidyltransferase involved in the post-translational modification of proteins. It can catalyze the addition of adenosine monophosphate (AMP) or uridine monophosphate (UMP) to a protein, resulting in modifications known as AMPylation and UMPylation. The chain is Protein nucleotidyltransferase YdiU from Methylobacillus flagellatus (strain ATCC 51484 / DSM 6875 / VKM B-1610 / KT).